A 402-amino-acid polypeptide reads, in one-letter code: Zinc finger protein 586 (402 aa).

A KRAB domain is found at 15–87 (VTFEDVAVNF…DQGGHSGERP (73 aa)). The C2H2-type 1; degenerate zinc-finger motif lies at 88-116 (YECGEYRKLFKNKSCLTEPRRDHKHRNVR). The C2H2-type 2; degenerate zinc-finger motif lies at 122 to 144 (YECSKYGKLFHQKPTLHIHERFH). A C2H2-type 3; degenerate zinc finger spans residues 150–172 (YECSECGKSFHQSSSLLQRQTLH). C2H2-type zinc fingers lie at residues 178 to 200 (YECI…RKVH), 206 to 228 (YECN…RRIH), 234 to 256 (YECS…LRVH), 262 to 284 (YECV…QRVH), 290 to 312 (YECS…QRVH), 317 to 339 (HECG…LRVH), 345 to 367 (YECS…LRVH), and 373 to 395 (YECI…QRVH).

The protein belongs to the krueppel C2H2-type zinc-finger protein family.

It is found in the nucleus. In terms of biological role, may be involved in transcriptional regulation. In Homo sapiens (Human), this protein is Zinc finger protein 586 (ZNF586).